A 259-amino-acid polypeptide reads, in one-letter code: Cobalt transport protein CbiM (259 aa).

Residues 1–25 (MFRRTTWLTLYLLLAMAALARPAFA) form the signal peptide. The next 6 membrane-spanning stretches (helical) occupy residues 31-51 (GFLPFNWAAFWFIVVLPFWIW), 68-88 (MLLGLAGAYTFVLSALKLPSV), 100-120 (LGAVLFGPAAMSILGGIVLLF), 132-152 (TLGANTFSMAVVGPFVAYGLY), 160-180 (GSMPLAVFLAATLGDLMTYVT), and 206-226 (IFAVTQLPLAISEGFLTVIVF).

The protein belongs to the CbiM family. As to quaternary structure, forms an energy-coupling factor (ECF) transporter complex composed of an ATP-binding protein (A component, CbiO), a transmembrane protein (T component, CbiQ) and 2 possible substrate-capture proteins (S components, CbiM and CbiN) of unknown stoichimetry.

It localises to the cell membrane. Its pathway is cofactor biosynthesis; adenosylcobalamin biosynthesis. Functionally, part of the energy-coupling factor (ECF) transporter complex CbiMNOQ involved in cobalt import. The protein is Cobalt transport protein CbiM of Moorella thermoacetica (strain ATCC 39073 / JCM 9320).